Reading from the N-terminus, the 373-residue chain is Chaperone protein DnaJ (373 aa).

The 66-residue stretch at Asn-4 to Gly-69 folds into the J domain. The segment at Gly-133–Lys-210 adopts a CR-type zinc-finger fold. Zn(2+) contacts are provided by Cys-146, Cys-149, Cys-162, Cys-165, Cys-184, Cys-187, Cys-198, and Cys-201. 4 CXXCXGXG motif repeats span residues Cys-146–Gly-153, Cys-162–Gly-169, Cys-184–Gly-191, and Cys-198–Gly-205.

This sequence belongs to the DnaJ family. Homodimer. The cofactor is Zn(2+).

The protein localises to the cytoplasm. Its function is as follows. Participates actively in the response to hyperosmotic and heat shock by preventing the aggregation of stress-denatured proteins and by disaggregating proteins, also in an autonomous, DnaK-independent fashion. Unfolded proteins bind initially to DnaJ; upon interaction with the DnaJ-bound protein, DnaK hydrolyzes its bound ATP, resulting in the formation of a stable complex. GrpE releases ADP from DnaK; ATP binding to DnaK triggers the release of the substrate protein, thus completing the reaction cycle. Several rounds of ATP-dependent interactions between DnaJ, DnaK and GrpE are required for fully efficient folding. Also involved, together with DnaK and GrpE, in the DNA replication of plasmids through activation of initiation proteins. The chain is Chaperone protein DnaJ from Campylobacter lari (strain RM2100 / D67 / ATCC BAA-1060).